The chain runs to 860 residues: Leucine--tRNA ligase (860 aa).

The 'HIGH' region signature appears at 42 to 52 (PYPSGRLHMGH). Positions 619–623 (KMSKS) match the 'KMSKS' region motif. K622 contacts ATP.

Belongs to the class-I aminoacyl-tRNA synthetase family.

It localises to the cytoplasm. It carries out the reaction tRNA(Leu) + L-leucine + ATP = L-leucyl-tRNA(Leu) + AMP + diphosphate. The polypeptide is Leucine--tRNA ligase (Escherichia coli O17:K52:H18 (strain UMN026 / ExPEC)).